Consider the following 548-residue polypeptide: MAAPISTNNVCSDDARPVTYHPNVWSDYFLRYTSELTEISVAKKEEHERQKEAIRNLLLQTRDDSTLKLELVDAIQRLGIGYHFEEEIHNSLRNIYDTNPIYNAEDDNLRVAALRFRLIRQQGFPAPCDVFRKFVDEEGEFKSWVSNDVEGLLNLYEASNFAVHGEEILEKALEFCSLRLEFLTQGMTNSLSMRVKEALKIPISKTLTRLGARKFMSMYQEDESHNETLLNFAKLDFNLVQKIHQKELNQITRWWKELDFGKNLPFARDRPVECYFWIVGVYFEPRYGIARTLLTKIIYLASVLDDIYDVYGTLAELTIFTQIIRRWDSDAMDQLPPYMRIYCKALFDVYVEMEEEMGKIRKSYAVEYAKKEMKRLAEMYFQEAQWAFSKYKPTMKEYLKVALISSGYMMMTINSLTTIEDLITEEEFNWILSEPRILRASLTITRLMDDLAGYGTEGKMSAVHYYMAENGVSEGEAFKEVSGIIKSAWKDVNAECVEPRAASTTILRCVVDFTRVIVLLYSDEDAYGNSQTKTKDLIKSVLVDPLII.

Residues R268, D305, D309, R446, and D449 each contribute to the (2E,6E)-farnesyl diphosphate site. Positions 305 and 309 each coordinate Mg(2+). The DDXXD motif signature appears at 305–309 (DDIYD). Residues D449 and E457 each contribute to the Mg(2+) site.

The protein belongs to the terpene synthase family. The cofactor is Mg(2+).

The catalysed reaction is (2E,6E)-farnesyl diphosphate = (-)-(E)-beta-caryophyllene + diphosphate. It participates in secondary metabolite biosynthesis; terpenoid biosynthesis. In terms of biological role, sesquiterpene synthase that catalyzes the formation of sesquiterpenes and sesquiterpenoid alcohols. Converts farnesyl diphosphate (FPP) to beta-caryophyllene. Can use geranyl diphosphate (GPP) to produce myrcene, limonene and camphene. The chain is Beta-caryophyllene synthase from Lavandula angustifolia (Lavender).